We begin with the raw amino-acid sequence, 537 residues long: Cytochrome P450 27C1 (537 aa).

Heme is bound at residue Cys483.

This sequence belongs to the cytochrome P450 family. It depends on heme as a cofactor. As to expression, expressed in the dorsal third of retinal pigment epithelium, but not in the ventral counterpart (at protein level).

Its subcellular location is the membrane. It catalyses the reaction all-trans-retinol + 2 reduced [adrenodoxin] + O2 + 2 H(+) = all-trans-3,4-didehydroretinol + 2 oxidized [adrenodoxin] + 2 H2O. Efficiently catalyzes the conversion of all-trans retinol (also called vitamin A1, the precursor of 11-cis retinal) to 3,4-didehydroretinol (also called vitamin A2, the precursor of 11-cis 3,4-didehydroretinal), also acts on all-trans retinal and all-trans retinoic acid. The replacement of 11-cis retinal chromophore in photopigments with 11-cis 3,4-didehydroretinal enhances sensitivity to long-wavelength light. This may improve vision in fresh water which is often turbid. This is Cytochrome P450 27C1 (cyp27c1) from Aquarana catesbeiana (American bullfrog).